Consider the following 346-residue polypeptide: Probable RNA methyltransferase Pmen_2155 (346 aa).

The active-site Proton acceptor is Glu-91. One can recognise a Radical SAM core domain in the interval 94–320 (LLPRDGLCIS…TKVRNSAGQD (227 aa)). Cysteines 101 and 325 form a disulfide. [4Fe-4S] cluster is bound by residues Cys-108, Cys-112, and Cys-115. S-adenosyl-L-methionine is bound by residues 153-154 (GE), Ser-183, 206-208 (SLH), and Asn-282. Cys-325 (S-methylcysteine intermediate) is an active-site residue.

It belongs to the radical SAM superfamily. RlmN family. [4Fe-4S] cluster serves as cofactor.

It localises to the cytoplasm. The chain is Probable RNA methyltransferase Pmen_2155 from Ectopseudomonas mendocina (strain ymp) (Pseudomonas mendocina).